The sequence spans 304 residues: MLLPAVISFIVYAVFLQEANGHAAERADSRKPIWDIAHMVNDLGLVDEYLGDGANGLELDVAFTADGTADKMYHGVPCDCFRSCTRTEGFTKYMDYIRQLTTPGNSKFKSQLILLIMDLKLNGIEPNVAYAAGKSVAEKLLSGYWQNGKSGARAYIVLSLETITRPNFISGFRDAIKASGHEELFEKIGWDFSGNEDLGEIRRVYQKYGIEDHIWQGDGITNCLPRGDYRLTEAMKKKNDPNYKYTLKVYTWSIDKESSIRNALRLGVDAVMTNYPARVKSILRESEFSGTHRMATYDDNPWQK.

Residues 1–21 (MLLPAVISFIVYAVFLQEANG) form the signal peptide. A propeptide spanning residues 22 to 26 (HAAER) is cleaved from the precursor. Residue H38 is part of the active site. The Mg(2+) site is built by E58 and D60. H74 acts as the Nucleophile in catalysis. Disulfide bonds link C78–C84 and C80–C223. D118 contributes to the Mg(2+) binding site.

Belongs to the arthropod phospholipase D family. Class II subfamily. Class IIb sub-subfamily. Requires Mg(2+) as cofactor. As to expression, expressed by the venom gland.

It is found in the secreted. It carries out the reaction an N-(acyl)-sphingosylphosphocholine = an N-(acyl)-sphingosyl-1,3-cyclic phosphate + choline. It catalyses the reaction an N-(acyl)-sphingosylphosphoethanolamine = an N-(acyl)-sphingosyl-1,3-cyclic phosphate + ethanolamine. The enzyme catalyses a 1-acyl-sn-glycero-3-phosphocholine = a 1-acyl-sn-glycero-2,3-cyclic phosphate + choline. The catalysed reaction is a 1-acyl-sn-glycero-3-phosphoethanolamine = a 1-acyl-sn-glycero-2,3-cyclic phosphate + ethanolamine. Its function is as follows. Dermonecrotic toxins cleave the phosphodiester linkage between the phosphate and headgroup of certain phospholipids (sphingolipid and lysolipid substrates), forming an alcohol (often choline) and a cyclic phosphate. This toxin acts on sphingomyelin (SM) with low activity. It may also act on ceramide phosphoethanolamine (CPE), lysophosphatidylcholine (LPC) and lysophosphatidylethanolamine (LPE), but not on lysophosphatidylserine (LPS), and lysophosphatidylglycerol (LPG). It acts by transphosphatidylation, releasing exclusively cyclic phosphate products as second products. Induces inflammatory response but no or very weak hemolysis, dermonecrosis, vascular permeability, edema, and cytotoxicity against renal epithelial cells. Causes swelling and erythema. In vivo, is not lethal to mice when intraperitoneally injected. This chain is Dermonecrotic toxin LiSicTox-betaIA1i, found in Loxosceles intermedia (Brown spider).